Consider the following 250-residue polypeptide: Probable transcriptional regulatory protein DIP1378 (250 aa).

Residues 1 to 22 form a disordered region; sequence MSGHSKWATTKHKKAANDAKRG.

It belongs to the TACO1 family.

It localises to the cytoplasm. The protein is Probable transcriptional regulatory protein DIP1378 of Corynebacterium diphtheriae (strain ATCC 700971 / NCTC 13129 / Biotype gravis).